Reading from the N-terminus, the 516-residue chain is MSATLRFDNIGKVFPGVRALDGVSFDVNVGQVHGLMGENGAGKSTLLKILGGEYQPDSGRVMIDGNEVRFTSAASSIAAGIAVIHQELQYVPDLTVAENLLLGQLPNSLGWVNKREAKRFVRERLEAMGVALDPNAKLRKLSIAQRQMVEICKALLRNARVIALDEPTSSLSHRETEVLFKLVRDLRADNRAMIYISHRMDEIYELCDACTIFRDGRKIASHPTLEGVSRDTIVSEMVGREISDIYNYSARPLGEVRFAAKAIEGHALAQPASFEVRRGEIVGFFGLVGAGRSELMHLVYGADRKKGGELTLDGKPIKVRSAGEAIRHGIVLCPEDRKEEGIVAMASVSENINISCRRHYLRAGMFLDRKKEAETADRFIKLLKIKTPSRRQKIRFLSGGNQQKAILSRWLAEPDLKVVILDEPTRGIDVGAKHEIYNVIYQLAERGCAIVMISSELPEVLGVSDRIVVMRQGRISGELARQDATEQSVLSLALPQSSTALPGTDAGTETAAQQAA.

2 ABC transporter domains span residues 5 to 240 (LRFD…MVGR) and 240 to 497 (REIS…LPQS). Position 37–44 (37–44 (GENGAGKS)) interacts with ATP.

This sequence belongs to the ABC transporter superfamily. Arabinose importer (TC 3.A.1.2.2) family. The complex is composed of two ATP-binding proteins (AraG), two transmembrane proteins (AraH) and a solute-binding protein (AraF).

It is found in the cell inner membrane. It catalyses the reaction L-arabinose(out) + ATP + H2O = L-arabinose(in) + ADP + phosphate + H(+). Part of the ABC transporter complex AraFGH involved in arabinose import. Responsible for energy coupling to the transport system. The sequence is that of Arabinose import ATP-binding protein AraG from Paraburkholderia xenovorans (strain LB400).